Here is a 61-residue protein sequence, read N- to C-terminus: UPF0434 protein Sama_1339 (61 aa).

It belongs to the UPF0434 family.

The protein is UPF0434 protein Sama_1339 of Shewanella amazonensis (strain ATCC BAA-1098 / SB2B).